Reading from the N-terminus, the 279-residue chain is Protease HtpX homolog (279 aa).

Transmembrane regions (helical) follow at residues 6–26 and 29–49; these read VFVL…ALGG and GAIL…WGSS. Zn(2+) is bound at residue histidine 130. The active site involves glutamate 131. Histidine 134 contributes to the Zn(2+) binding site. Helical transmembrane passes span 145–165 and 176–196; these read IAAT…FFGG and VAGI…QFAI. Zn(2+) is bound at residue glutamate 201.

This sequence belongs to the peptidase M48B family. Zn(2+) is required as a cofactor.

It localises to the cell inner membrane. This chain is Protease HtpX homolog, found in Gemmatimonas aurantiaca (strain DSM 14586 / JCM 11422 / NBRC 100505 / T-27).